The following is a 217-amino-acid chain: 3,4-dihydroxy-2-butanone 4-phosphate synthase (217 aa).

D-ribulose 5-phosphate-binding positions include 37-38 (RE), aspartate 42, 150-154 (RRGHT), and glutamate 174. Glutamate 38 contributes to the Mg(2+) binding site. Histidine 153 is a binding site for Mg(2+).

Belongs to the DHBP synthase family. Homodimer. Requires Mg(2+) as cofactor. Mn(2+) serves as cofactor.

It catalyses the reaction D-ribulose 5-phosphate = (2S)-2-hydroxy-3-oxobutyl phosphate + formate + H(+). It participates in cofactor biosynthesis; riboflavin biosynthesis; 2-hydroxy-3-oxobutyl phosphate from D-ribulose 5-phosphate: step 1/1. Its function is as follows. Catalyzes the conversion of D-ribulose 5-phosphate to formate and 3,4-dihydroxy-2-butanone 4-phosphate. This is 3,4-dihydroxy-2-butanone 4-phosphate synthase from Serratia proteamaculans (strain 568).